The primary structure comprises 691 residues: Elongation factor G (691 aa).

Positions 8-283 (KRVRNIGIAA…AVVAYLPAPD (276 aa)) constitute a tr-type G domain. Residues 17–24 (AHIDAGKT), 81–85 (DTPGH), and 135–138 (NKMD) contribute to the GTP site.

It belongs to the TRAFAC class translation factor GTPase superfamily. Classic translation factor GTPase family. EF-G/EF-2 subfamily.

It is found in the cytoplasm. Functionally, catalyzes the GTP-dependent ribosomal translocation step during translation elongation. During this step, the ribosome changes from the pre-translocational (PRE) to the post-translocational (POST) state as the newly formed A-site-bound peptidyl-tRNA and P-site-bound deacylated tRNA move to the P and E sites, respectively. Catalyzes the coordinated movement of the two tRNA molecules, the mRNA and conformational changes in the ribosome. The chain is Elongation factor G from Campylobacter lari (strain RM2100 / D67 / ATCC BAA-1060).